The sequence spans 234 residues: uncharacterized protein (234 aa).

The segment at Gln65–Asn89 is disordered. The RING-type zinc finger occupies Cys185–Lys220.

It belongs to the IIV-6 175R/332L family.

This is an uncharacterized protein from Acheta domesticus (House cricket).